Here is a 241-residue protein sequence, read N- to C-terminus: tRNA (guanine-N(7)-)-methyltransferase (241 aa).

The span at 1-10 (MTESNDTPIQ) shows a compositional bias: polar residues. Residues 1–20 (MTESNDTPIQTEEGDERQHR) form a disordered region. 4 residues coordinate S-adenosyl-L-methionine: glutamate 71, glutamate 96, aspartate 123, and aspartate 146. Aspartate 146 is an active-site residue. Residues lysine 150, aspartate 182, and 219-222 (TKFE) contribute to the substrate site.

This sequence belongs to the class I-like SAM-binding methyltransferase superfamily. TrmB family.

The enzyme catalyses guanosine(46) in tRNA + S-adenosyl-L-methionine = N(7)-methylguanosine(46) in tRNA + S-adenosyl-L-homocysteine. Its pathway is tRNA modification; N(7)-methylguanine-tRNA biosynthesis. Catalyzes the formation of N(7)-methylguanine at position 46 (m7G46) in tRNA. The polypeptide is tRNA (guanine-N(7)-)-methyltransferase (Pseudomonas fluorescens (strain Pf0-1)).